Consider the following 209-residue polypeptide: Uracil phosphoribosyltransferase (209 aa).

5-phospho-alpha-D-ribose 1-diphosphate is bound by residues Arg79, Arg104, and 131–139; that span reads DPMLATGGS. Uracil-binding positions include Ile194 and 199–201; that span reads GDA. Asp200 provides a ligand contact to 5-phospho-alpha-D-ribose 1-diphosphate.

Belongs to the UPRTase family. Mg(2+) is required as a cofactor.

The catalysed reaction is UMP + diphosphate = 5-phospho-alpha-D-ribose 1-diphosphate + uracil. Its pathway is pyrimidine metabolism; UMP biosynthesis via salvage pathway; UMP from uracil: step 1/1. Its activity is regulated as follows. Allosterically activated by GTP. Catalyzes the conversion of uracil and 5-phospho-alpha-D-ribose 1-diphosphate (PRPP) to UMP and diphosphate. The sequence is that of Uracil phosphoribosyltransferase from Bacillus licheniformis (strain ATCC 14580 / DSM 13 / JCM 2505 / CCUG 7422 / NBRC 12200 / NCIMB 9375 / NCTC 10341 / NRRL NRS-1264 / Gibson 46).